Consider the following 58-residue polypeptide: UPF0391 membrane protein Sfri_4000 (58 aa).

A run of 2 helical transmembrane segments spans residues 6–26 (LMFLVIAVIAGLFGFTGIAGA) and 27–47 (AAGIAKIIFFIFIVLLVISLV).

Belongs to the UPF0391 family.

The protein resides in the cell membrane. This chain is UPF0391 membrane protein Sfri_4000, found in Shewanella frigidimarina (strain NCIMB 400).